We begin with the raw amino-acid sequence, 202 residues long: B-cell CLL/lymphoma 7 protein family member B (202 aa).

The segment at 53 to 202 (DSKEKEKSKS…PTVPQTASES (150 aa)) is disordered. Residues 90–99 (ENSNQSSVSD) are compositionally biased toward polar residues. The span at 107-123 (SSTNSSPSPQQSESLSP) shows a compositional bias: low complexity. Phosphoserine occurs at positions 114, 118, 120, 122, 127, 148, and 152.

This sequence belongs to the BCL7 family. In terms of tissue distribution, ubiquitous.

Positive regulator of apoptosis. Plays a role in the Wnt signaling pathway, negatively regulating the expression of Wnt signaling components CTNNB1 and HMGA1. Involved in cell cycle progression, maintenance of the nuclear structure and stem cell differentiation. May play a role in lung tumor development or progression. This Homo sapiens (Human) protein is B-cell CLL/lymphoma 7 protein family member B (BCL7B).